A 224-amino-acid polypeptide reads, in one-letter code: UPF0758 protein PFLU_5982 (224 aa).

The region spanning 102 to 224 (VLESPKAVRD…PLSMAEYGWL (123 aa)) is the MPN domain. Positions 173, 175, and 186 each coordinate Zn(2+). The JAMM motif signature appears at 173–186 (HNHPSGSLEPSAAD).

The protein belongs to the UPF0758 family.

The polypeptide is UPF0758 protein PFLU_5982 (Pseudomonas fluorescens (strain SBW25)).